The primary structure comprises 159 residues: 6,7-dimethyl-8-ribityllumazine synthase (159 aa).

Residues W30, 64-66 (TFE), and 88-90 (CVI) contribute to the 5-amino-6-(D-ribitylamino)uracil site. Residue 93-94 (ET) participates in (2S)-2-hydroxy-3-oxobutyl phosphate binding. H96 acts as the Proton donor in catalysis. F121 serves as a coordination point for 5-amino-6-(D-ribitylamino)uracil. R135 contributes to the (2S)-2-hydroxy-3-oxobutyl phosphate binding site.

This sequence belongs to the DMRL synthase family.

The enzyme catalyses (2S)-2-hydroxy-3-oxobutyl phosphate + 5-amino-6-(D-ribitylamino)uracil = 6,7-dimethyl-8-(1-D-ribityl)lumazine + phosphate + 2 H2O + H(+). Its pathway is cofactor biosynthesis; riboflavin biosynthesis; riboflavin from 2-hydroxy-3-oxobutyl phosphate and 5-amino-6-(D-ribitylamino)uracil: step 1/2. Its function is as follows. Catalyzes the formation of 6,7-dimethyl-8-ribityllumazine by condensation of 5-amino-6-(D-ribitylamino)uracil with 3,4-dihydroxy-2-butanone 4-phosphate. This is the penultimate step in the biosynthesis of riboflavin. The chain is 6,7-dimethyl-8-ribityllumazine synthase from Cytophaga hutchinsonii (strain ATCC 33406 / DSM 1761 / CIP 103989 / NBRC 15051 / NCIMB 9469 / D465).